Consider the following 587-residue polypeptide: NADH-quinone oxidoreductase subunit C/D (587 aa).

Residues 1 to 178 (MAAPTTEHAE…EPFSLPDDVQ (178 aa)) form an NADH dehydrogenase I subunit C region. The tract at residues 202-587 (DFLFLNLGPN…IDFVMADVDR (386 aa)) is NADH dehydrogenase I subunit D.

This sequence in the N-terminal section; belongs to the complex I 30 kDa subunit family. The protein in the C-terminal section; belongs to the complex I 49 kDa subunit family. In terms of assembly, NDH-1 is composed of 13 different subunits. Subunits NuoB, CD, E, F, and G constitute the peripheral sector of the complex.

It localises to the cell inner membrane. It catalyses the reaction a quinone + NADH + 5 H(+)(in) = a quinol + NAD(+) + 4 H(+)(out). NDH-1 shuttles electrons from NADH, via FMN and iron-sulfur (Fe-S) centers, to quinones in the respiratory chain. The immediate electron acceptor for the enzyme in this species is believed to be ubiquinone. Couples the redox reaction to proton translocation (for every two electrons transferred, four hydrogen ions are translocated across the cytoplasmic membrane), and thus conserves the redox energy in a proton gradient. The chain is NADH-quinone oxidoreductase subunit C/D from Methylococcus capsulatus (strain ATCC 33009 / NCIMB 11132 / Bath).